A 338-amino-acid chain; its full sequence is Elongation factor Ts, mitochondrial (338 aa).

The transit peptide at 1–42 (MSPSIAMFTLTPNARALASKTSKMDLIKNLRERTGAPIVDVK) directs the protein to the mitochondrion.

Belongs to the EF-Ts family.

It is found in the mitochondrion. Associates with the EF-Tu.GDP complex and induces the exchange of GDP to GTP. It remains bound to the aminoacyl-tRNA.EF-Tu.GTP complex up to the GTP hydrolysis stage on the ribosome. This is Elongation factor Ts, mitochondrial from Ostreococcus tauri.